The chain runs to 193 residues: MKVTNAEYMASAYLSSQFPSEMYPEISFIGRSNVGKSSLINTLINRKNLAYTSKQPGKTRTINFFLINKSLYFVDLPGYGFAKVSKTMQKDWEQLVNAYLSQRNTLKLSILIIDGRHGPKDADIDMFDYLLDFERPVLLVATKMDKVKANKRKQRITEMRSALELDQDDELITFSSATGEGKNELWQIIEDLL.

Residues 22–193 (MYPEISFIGR…ELWQIIEDLL (172 aa)) form the EngB-type G domain. Residues 30-37 (GRSNVGKS), 57-61 (GKTRT), 75-78 (DLPG), 142-145 (TKMD), and 174-176 (FSS) each bind GTP. Mg(2+)-binding residues include Ser37 and Thr59.

Belongs to the TRAFAC class TrmE-Era-EngA-EngB-Septin-like GTPase superfamily. EngB GTPase family. The cofactor is Mg(2+).

Necessary for normal cell division and for the maintenance of normal septation. The sequence is that of Probable GTP-binding protein EngB from Natranaerobius thermophilus (strain ATCC BAA-1301 / DSM 18059 / JW/NM-WN-LF).